Reading from the N-terminus, the 283-residue chain is Bifunctional protein FolD (283 aa).

NADP(+) contacts are provided by residues 165 to 167 (GRS), S190, and I231.

Belongs to the tetrahydrofolate dehydrogenase/cyclohydrolase family. As to quaternary structure, homodimer.

The enzyme catalyses (6R)-5,10-methylene-5,6,7,8-tetrahydrofolate + NADP(+) = (6R)-5,10-methenyltetrahydrofolate + NADPH. It carries out the reaction (6R)-5,10-methenyltetrahydrofolate + H2O = (6R)-10-formyltetrahydrofolate + H(+). The protein operates within one-carbon metabolism; tetrahydrofolate interconversion. Functionally, catalyzes the oxidation of 5,10-methylenetetrahydrofolate to 5,10-methenyltetrahydrofolate and then the hydrolysis of 5,10-methenyltetrahydrofolate to 10-formyltetrahydrofolate. The chain is Bifunctional protein FolD from Janthinobacterium sp. (strain Marseille) (Minibacterium massiliensis).